We begin with the raw amino-acid sequence, 206 residues long: Orotate phosphoribosyltransferase (206 aa).

5-phospho-alpha-D-ribose 1-diphosphate is bound by residues arginine 93, lysine 97, histidine 99, and 119–127; that span reads EDLISTGGT. Position 123 (serine 123) interacts with orotate.

It belongs to the purine/pyrimidine phosphoribosyltransferase family. PyrE subfamily. As to quaternary structure, homodimer. The cofactor is Mg(2+).

It carries out the reaction orotidine 5'-phosphate + diphosphate = orotate + 5-phospho-alpha-D-ribose 1-diphosphate. It functions in the pathway pyrimidine metabolism; UMP biosynthesis via de novo pathway; UMP from orotate: step 1/2. Its function is as follows. Catalyzes the transfer of a ribosyl phosphate group from 5-phosphoribose 1-diphosphate to orotate, leading to the formation of orotidine monophosphate (OMP). This chain is Orotate phosphoribosyltransferase, found in Bacillus caldolyticus.